The primary structure comprises 323 residues: Elongation factor P--(R)-beta-lysine ligase (323 aa).

74–76 (SPE) contacts substrate. ATP-binding positions include 98–100 (RNE) and Asn107. A substrate-binding site is contributed by Tyr116. Residue 242–243 (EL) participates in ATP binding. Glu249 is a substrate binding site. ATP is bound at residue Gly298.

The protein belongs to the class-II aminoacyl-tRNA synthetase family. EpmA subfamily. In terms of assembly, homodimer.

The enzyme catalyses D-beta-lysine + L-lysyl-[protein] + ATP = N(6)-((3R)-3,6-diaminohexanoyl)-L-lysyl-[protein] + AMP + diphosphate + H(+). Functionally, with EpmB is involved in the beta-lysylation step of the post-translational modification of translation elongation factor P (EF-P). Catalyzes the ATP-dependent activation of (R)-beta-lysine produced by EpmB, forming a lysyl-adenylate, from which the beta-lysyl moiety is then transferred to the epsilon-amino group of a conserved specific lysine residue in EF-P. This is Elongation factor P--(R)-beta-lysine ligase from Vibrio vulnificus (strain YJ016).